Reading from the N-terminus, the 146-residue chain is 3-hydroxyacyl-[acyl-carrier-protein] dehydratase FabZ (146 aa).

Histidine 48 is a catalytic residue.

The protein belongs to the thioester dehydratase family. FabZ subfamily.

The protein resides in the cytoplasm. The catalysed reaction is a (3R)-hydroxyacyl-[ACP] = a (2E)-enoyl-[ACP] + H2O. Involved in unsaturated fatty acids biosynthesis. Catalyzes the dehydration of short chain beta-hydroxyacyl-ACPs and long chain saturated and unsaturated beta-hydroxyacyl-ACPs. The protein is 3-hydroxyacyl-[acyl-carrier-protein] dehydratase FabZ of Acetivibrio thermocellus (strain ATCC 27405 / DSM 1237 / JCM 9322 / NBRC 103400 / NCIMB 10682 / NRRL B-4536 / VPI 7372) (Clostridium thermocellum).